Here is a 178-residue protein sequence, read N- to C-terminus: MSQAQENEHAGPAVPQTRTARHRRIVDILNRQPVRSQSQLAKLLADDGLSVTQATLSRDLDELNAVKIRNNDGDLIYAVPSEGGFRTPRVPLGESAKEERMRRLSAELLISAEASANLVVLRTPPGAAQFLASAIDQAELHDILGTIAGDDTLLLISREPTGGQALADHLLRLAQNHH.

The interval 1–21 is disordered; sequence MSQAQENEHAGPAVPQTRTAR.

Belongs to the ArgR family.

The protein resides in the cytoplasm. It functions in the pathway amino-acid biosynthesis; L-arginine biosynthesis [regulation]. Regulates arginine biosynthesis genes. The polypeptide is Arginine repressor (Streptomyces avermitilis (strain ATCC 31267 / DSM 46492 / JCM 5070 / NBRC 14893 / NCIMB 12804 / NRRL 8165 / MA-4680)).